Consider the following 361-residue polypeptide: Peptide chain release factor 1 (361 aa).

Gln-235 bears the N5-methylglutamine mark.

It belongs to the prokaryotic/mitochondrial release factor family. Methylated by PrmC. Methylation increases the termination efficiency of RF1.

It is found in the cytoplasm. Its function is as follows. Peptide chain release factor 1 directs the termination of translation in response to the peptide chain termination codons UAG and UAA. The polypeptide is Peptide chain release factor 1 (Azoarcus sp. (strain BH72)).